A 222-amino-acid chain; its full sequence is Millepora cytotoxin-1 (222 aa).

The N-terminal stretch at 1–20 is a signal peptide; that stretch reads MVTLYLHVPILLLVVITARA. Positions 21–75 are excised as a propeptide; that stretch reads APKPDTHNPFDELSSVAEKQDLHYGDRSRKDPFIAQNDVGNNFRDGTQENLTKVR. 3 cysteine pairs are disulfide-bonded: Cys89–Cys115, Cys142–Cys168, and Cys179–Cys222. Repeats lie at residues 100-109, 153-162, and 206-215; these read SIHDNHYEDR, SIHDNYYEDR, and SQHNNYYEDR.

Belongs to the dermatopontin family. Is not glycosylated.

The protein localises to the secreted. It localises to the nematocyst. Is potently cytotoxic (EC(50) value 79 ng/mL) towards L1210 mouse leukemia cells, has hemagglutination activity on sheep erythrocytes, and is lethal in crayfish. Has no phospholipase A2 activity. This is Millepora cytotoxin-1 from Millepora dichotoma (Net fire coral).